The following is a 143-amino-acid chain: 6,7-dimethyl-8-ribityllumazine synthase (143 aa).

5-amino-6-(D-ribitylamino)uracil is bound by residues W10, 44–46, and 68–70; these read SFE and CVI. 73–74 serves as a coordination point for (2S)-2-hydroxy-3-oxobutyl phosphate; the sequence is DT. The Proton donor role is filled by H76. Position 101 (Y101) interacts with 5-amino-6-(D-ribitylamino)uracil. (2S)-2-hydroxy-3-oxobutyl phosphate is bound at residue R115.

This sequence belongs to the DMRL synthase family.

It carries out the reaction (2S)-2-hydroxy-3-oxobutyl phosphate + 5-amino-6-(D-ribitylamino)uracil = 6,7-dimethyl-8-(1-D-ribityl)lumazine + phosphate + 2 H2O + H(+). The protein operates within cofactor biosynthesis; riboflavin biosynthesis; riboflavin from 2-hydroxy-3-oxobutyl phosphate and 5-amino-6-(D-ribitylamino)uracil: step 1/2. Its function is as follows. Catalyzes the formation of 6,7-dimethyl-8-ribityllumazine by condensation of 5-amino-6-(D-ribitylamino)uracil with 3,4-dihydroxy-2-butanone 4-phosphate. This is the penultimate step in the biosynthesis of riboflavin. In Bacteroides fragilis (strain YCH46), this protein is 6,7-dimethyl-8-ribityllumazine synthase.